A 239-amino-acid polypeptide reads, in one-letter code: Ribosomal RNA small subunit methyltransferase G (239 aa).

S-adenosyl-L-methionine contacts are provided by residues glycine 80, phenylalanine 85, 103–105 (EAS), 131–132 (AE), and arginine 150.

It belongs to the methyltransferase superfamily. RNA methyltransferase RsmG family.

It is found in the cytoplasm. In terms of biological role, specifically methylates the N7 position of a guanine in 16S rRNA. The polypeptide is Ribosomal RNA small subunit methyltransferase G (Caldanaerobacter subterraneus subsp. tengcongensis (strain DSM 15242 / JCM 11007 / NBRC 100824 / MB4) (Thermoanaerobacter tengcongensis)).